Here is a 669-residue protein sequence, read N- to C-terminus: JmjC domain-containing histone demethylation protein 1 (669 aa).

Residues 1–61 (MTAVAASSRV…RRKKPRTELV (61 aa)) form a disordered region. 2 stretches are compositionally biased toward polar residues: residues 16 to 27 (ASSSAHPRTLRS) and 36 to 49 (HDSSISPSAAQSKQ). The segment at 65–126 (ELDCAACPAV…KWYCQPCITR (62 aa)) adopts a PHD-type zinc-finger fold. Disordered stretches follow at residues 131–150 (FESGTSSSHPPFANVVRPPR) and 220–256 (PPDRSSQAPHVQAKAEDVAASPVPRPKPARAKKQATH). Residues 246–255 (KPARAKKQAT) show a composition bias toward basic residues. The region spanning 332-494 (VTGTPMQAYV…TQWKLVEIEE (163 aa)) is the JmjC domain. Fe cation contacts are provided by His-390 and Asp-392. Lys-407 contributes to the substrate binding site. Residue His-462 participates in Fe cation binding.

This sequence belongs to the JHDM1 histone demethylase family. It depends on Fe(2+) as a cofactor.

It localises to the nucleus. It catalyses the reaction N(6),N(6)-dimethyl-L-lysyl(36)-[histone H3] + 2 2-oxoglutarate + 2 O2 = L-lysyl(36)-[histone H3] + 2 formaldehyde + 2 succinate + 2 CO2. In terms of biological role, histone demethylase that specifically demethylates 'Lys-36' of histone H3, thereby playing a central role in histone code. The polypeptide is JmjC domain-containing histone demethylation protein 1 (JHD1) (Mycosarcoma maydis (Corn smut fungus)).